Reading from the N-terminus, the 505-residue chain is Lysine--tRNA ligase (505 aa).

2 residues coordinate Mg(2+): Glu415 and Glu422.

It belongs to the class-II aminoacyl-tRNA synthetase family. Homodimer. Mg(2+) serves as cofactor.

Its subcellular location is the cytoplasm. The enzyme catalyses tRNA(Lys) + L-lysine + ATP = L-lysyl-tRNA(Lys) + AMP + diphosphate. The sequence is that of Lysine--tRNA ligase from Shigella boydii serotype 4 (strain Sb227).